A 1458-amino-acid polypeptide reads, in one-letter code: RNA-directed RNA polymerase P1 (1458 aa).

The disordered stretch occupies residues Leu148 to Asn168. In terms of domain architecture, RdRp catalytic spans Val686–Glu894. The disordered stretch occupies residues Asp971 to Asn993. Over residues Asn979–Ser989 the composition is skewed to basic residues.

Belongs to the reoviridae RNA-directed RNA polymerase family.

It is found in the virion. The protein resides in the host cytoplasm. It catalyses the reaction RNA(n) + a ribonucleoside 5'-triphosphate = RNA(n+1) + diphosphate. Functionally, RNA-directed RNA polymerase that is involved in both transcription and genome replication. Together with the capping enzyme P5 and protein P7, forms an enzyme complex positioned near the channels situated at each of the five-fold vertices of the core. The protein is RNA-directed RNA polymerase P1 of Nephotettix cincticeps (Green rice leafhopper).